A 472-amino-acid polypeptide reads, in one-letter code: Uronate isomerase (472 aa).

This sequence belongs to the metallo-dependent hydrolases superfamily. Uronate isomerase family.

It carries out the reaction D-glucuronate = D-fructuronate. The catalysed reaction is aldehydo-D-galacturonate = keto-D-tagaturonate. It functions in the pathway carbohydrate metabolism; pentose and glucuronate interconversion. This Opitutus terrae (strain DSM 11246 / JCM 15787 / PB90-1) protein is Uronate isomerase.